The primary structure comprises 467 residues: Chromosomal replication initiator protein DnaA (467 aa).

The domain I, interacts with DnaA modulators stretch occupies residues 1–84; that stretch reads MDISLDQLWD…LQVEFSVSPH (84 aa). A domain II region spans residues 84–125; it reads HASVEAEPPSRAISPTSGRAGSLPASTTLGLEVGGSLPMRAP. The interval 89–108 is disordered; the sequence is AEPPSRAISPTSGRAGSLPA. Polar residues predominate over residues 96–108; the sequence is ISPTSGRAGSLPA. The interval 126–342 is domain III, AAA+ region; that stretch reads DLNPKYSFSR…GALIRAVAYV (217 aa). Positions 170, 172, 173, and 174 each coordinate ATP. The tract at residues 343–467 is domain IV, binds dsDNA; the sequence is SISGLPMSVE…LRVVANSRSS (125 aa).

It belongs to the DnaA family. In terms of assembly, oligomerizes as a right-handed, spiral filament on DNA at oriC.

Its subcellular location is the cytoplasm. In terms of biological role, plays an essential role in the initiation and regulation of chromosomal replication. ATP-DnaA binds to the origin of replication (oriC) to initiate formation of the DNA replication initiation complex once per cell cycle. Binds the DnaA box (a 9 base pair repeat at the origin) and separates the double-stranded (ds)DNA. Forms a right-handed helical filament on oriC DNA; dsDNA binds to the exterior of the filament while single-stranded (ss)DNA is stabiized in the filament's interior. The ATP-DnaA-oriC complex binds and stabilizes one strand of the AT-rich DNA unwinding element (DUE), permitting loading of DNA polymerase. After initiation quickly degrades to an ADP-DnaA complex that is not apt for DNA replication. Binds acidic phospholipids. The protein is Chromosomal replication initiator protein DnaA of Synechococcus sp. (strain JA-2-3B'a(2-13)) (Cyanobacteria bacterium Yellowstone B-Prime).